A 383-amino-acid chain; its full sequence is Fatty acid hydroxylase ahd1 (383 aa).

Transmembrane regions (helical) follow at residues 84–104, 123–143, 172–192, and 214–236; these read VMGL…NKSW, TVHT…LFAL, LIPV…IIYY, and VAQW…RALH. The Fatty acid hydroxylase domain occupies 217–341; the sequence is WLVCLLMEDI…VGLLDAIFKT (125 aa). The N-linked (GlcNAc...) asparagine glycan is linked to asparagine 342.

The protein belongs to the sterol desaturase family.

Its subcellular location is the membrane. Its pathway is secondary metabolite biosynthesis. Functionally, fatty acid hydroxylase; part of the gene cluster that mediates the biosynthesis of the glycolipid biosurfactant ustilagic acid (UA). UA is a secreted cellobiose glycolipid that is toxic for many microorganisms and confers biocontrol activity to U.maydis. UA consists of 15,16-dihydroxypalmitic or 2,15,16-trihydroxypalmitic acid, which is O-glycosidically linked to cellobiose at its terminal hydroxyl group. In addition, the cellobiose moiety is acetylated and acylated with a short-chain hydroxy fatty acid. UA biosynthesis starts with omega-hydroxylation of palmitic acid catalyzed by the cytochrome P450 monooxygenase cyp1. Terminal hydroxylation of palmitic acid precedes subterminal hydroxylation catalyzed by the cytochrome P450 monooxygenase cyp2. Sequential glucosylation of the hydroxy fatty acid is probably catalyzed by the glycosyltransferase ugt1. The cellobiose lipid is further decorated by acetylation of the proximal glucose residue and by acylation with a short-chain beta-hydroxy fatty acid at the distal glucose residue. The acyltransferase uat1 may be a good candidate for catalyzing either acetylation or acylation of the cellobiose lipid. The fatty acid synthase fas2 may be involved in synthesis of the carbon backbone of the short-chain beta-hydroxy fatty acid esterified to the cellobiose disaccharide. The secreted UA consists of a mixture of both alpha-hydroxylated and non-hydroxylated glycolipids; therefore, alpha-hydroxylation of the long-chain fatty, catalyzed by the fatty acid hydroxylase ahd1, occurs late in UA biosynthesis and may be the last step before secretion. The protein is Fatty acid hydroxylase ahd1 of Mycosarcoma maydis (Corn smut fungus).